Consider the following 208-residue polypeptide: Anti-sigma-W factor RsiW (208 aa).

The Cytoplasmic segment spans residues 1-87 (MSCPEQIVQL…ASVKRWFRTH (87 aa)). Positions 3, 30, 34, and 37 each coordinate Zn(2+). A helical transmembrane segment spans residues 88-108 (PVIAAAAVFIILMGGGFFNSW). Over 109 to 208 (HNDHNFSVSK…LDAFNPNGEE (100 aa)) the chain is Extracellular.

The protein belongs to the zinc-associated anti-sigma factor (ZAS) superfamily. Anti-sigma-W factor family. As to quaternary structure, forms a heterodimer with cognate sigma factor SigW, which probably prevents SigW from binding to DNA. It depends on Zn(2+) as a cofactor. In terms of processing, is processed by successive proteolytic events. First, the extracellular region of RsiW is cleaved by PrsW (site-1 cleavage) in response to cell envelope stresses. In a reconstituted E.coli system PrsW cuts between Ala-168 and Ser-169 followed by trimming by E.coli Tsp; the endogenous extracellular exopeptidase responsible for the event in B.subtilis has not been identified. Next, it undergoes cleavage at an intramembrane site (site-2 cleavage) mediated by RasP. This cleavage uncovers a cryptic proteolytic tag with conserved alanine residues in the transmembrane segment, that is recognized mainly by the ClpXP protease, which completely degrades the protein in the cytoplasm and leads to the induction of the sigma-W-controlled genes.

It localises to the cell membrane. Its function is as follows. The anti-sigma factor for extracytoplasmic function (ECF) sigma factor sigma-W (SigW). Holds SigW, its cognate ECF sigma factor, in an inactive form until released by regulated intramembrane proteolysis (RIP). SigW and RsiW mediate cell response to cell wall stress. RIP occurs when an extracytoplasmic signal triggers a concerted proteolytic cascade to transmit information and elicit cellular responses. The membrane-spanning regulatory substrate protein is first cut periplasmically (site-1 protease, S1P, PrsW), then within the membrane itself (site-2 protease, S2P, RasP), while cytoplasmic proteases finish degrading the anti-sigma factor, liberating sigma-W. This chain is Anti-sigma-W factor RsiW (rsiW), found in Bacillus subtilis (strain 168).